Here is a 149-residue protein sequence, read N- to C-terminus: Ubiquitin-conjugating enzyme E2 pex4 (149 aa).

The region spanning 1-149 (MAARLMKEYK…ARMYTRLYGC (149 aa)) is the UBC core domain. Cys86 serves as the catalytic Glycyl thioester intermediate.

It belongs to the ubiquitin-conjugating enzyme family.

The catalysed reaction is S-ubiquitinyl-[E1 ubiquitin-activating enzyme]-L-cysteine + [E2 ubiquitin-conjugating enzyme]-L-cysteine = [E1 ubiquitin-activating enzyme]-L-cysteine + S-ubiquitinyl-[E2 ubiquitin-conjugating enzyme]-L-cysteine.. It participates in protein modification; protein ubiquitination. Functionally, catalyzes the covalent attachment of ubiquitin to other proteins. Essential for peroxisome biogenesis. This chain is Ubiquitin-conjugating enzyme E2 pex4 (pex4), found in Dictyostelium discoideum (Social amoeba).